The sequence spans 439 residues: Proline--tRNA ligase (439 aa).

The protein belongs to the class-II aminoacyl-tRNA synthetase family. ProS type 2 subfamily. Homodimer.

It localises to the cytoplasm. It catalyses the reaction tRNA(Pro) + L-proline + ATP = L-prolyl-tRNA(Pro) + AMP + diphosphate. In terms of biological role, catalyzes the attachment of proline to tRNA(Pro) in a two-step reaction: proline is first activated by ATP to form Pro-AMP and then transferred to the acceptor end of tRNA(Pro). This chain is Proline--tRNA ligase, found in Bradyrhizobium diazoefficiens (strain JCM 10833 / BCRC 13528 / IAM 13628 / NBRC 14792 / USDA 110).